The chain runs to 289 residues: Ribosomal RNA small subunit methyltransferase A (289 aa).

Residues Asn33, Val35, Gly60, Glu81, Asp111, and Asn130 each coordinate S-adenosyl-L-methionine.

The protein belongs to the class I-like SAM-binding methyltransferase superfamily. rRNA adenine N(6)-methyltransferase family. RsmA subfamily.

It is found in the cytoplasm. The enzyme catalyses adenosine(1518)/adenosine(1519) in 16S rRNA + 4 S-adenosyl-L-methionine = N(6)-dimethyladenosine(1518)/N(6)-dimethyladenosine(1519) in 16S rRNA + 4 S-adenosyl-L-homocysteine + 4 H(+). Specifically dimethylates two adjacent adenosines (A1518 and A1519) in the loop of a conserved hairpin near the 3'-end of 16S rRNA in the 30S particle. May play a critical role in biogenesis of 30S subunits. The protein is Ribosomal RNA small subunit methyltransferase A of Corynebacterium efficiens (strain DSM 44549 / YS-314 / AJ 12310 / JCM 11189 / NBRC 100395).